The following is a 303-amino-acid chain: Signal recognition particle receptor FtsY (303 aa).

Residues 108–115 (GVNGAGKT), 190–194 (DTAGR), and 254–257 (TKLD) contribute to the GTP site.

This sequence belongs to the GTP-binding SRP family. FtsY subfamily. As to quaternary structure, part of the signal recognition particle protein translocation system, which is composed of SRP and FtsY. SRP is a ribonucleoprotein composed of Ffh and a 4.5S RNA molecule.

It localises to the cell inner membrane. It is found in the cytoplasm. It catalyses the reaction GTP + H2O = GDP + phosphate + H(+). Its function is as follows. Involved in targeting and insertion of nascent membrane proteins into the cytoplasmic membrane. Acts as a receptor for the complex formed by the signal recognition particle (SRP) and the ribosome-nascent chain (RNC). Interaction with SRP-RNC leads to the transfer of the RNC complex to the Sec translocase for insertion into the membrane, the hydrolysis of GTP by both Ffh and FtsY, and the dissociation of the SRP-FtsY complex into the individual components. The protein is Signal recognition particle receptor FtsY of Rickettsia bellii (strain RML369-C).